The primary structure comprises 486 residues: Sensor protein PhoQ (486 aa).

The Cytoplasmic portion of the chain corresponds to 1 to 16 (MKKLLHLFFPLSLRVR). A helical transmembrane segment spans residues 17-37 (FLLATAAVVLVLSLAYGMVAL). Residues 38-194 (IGYSVSFDKT…LKSSYMVWSW (157 aa)) lie on the Periplasmic side of the membrane. The a divalent metal cation site is built by aspartate 151 and aspartate 152. A helical transmembrane segment spans residues 195–215 (FIYVLSANLLLVIPLLWVAAW). The HAMP domain maps to 215 to 266 (WWSLRPIEALAKEVRELEEHNRELLNPATTRELTSLVRNLNRLLKSERERYD). Topologically, residues 216–486 (WSLRPIEALA…GRQHSAPKDE (271 aa)) are cytoplasmic. A Histidine kinase domain is found at 274–480 (DLTHSLKTPL…RMEVIFGRQH (207 aa)). Phosphohistidine; by autocatalysis is present on histidine 277. Mg(2+) is bound at residue asparagine 385. Residues 385-393 (NVLDNACKY), 415-420 (DDGPGI), and 434-446 (RVDT…GVGL) contribute to the ATP site. Residue glutamine 442 participates in Mg(2+) binding.

In terms of assembly, homodimer.

It is found in the cell inner membrane. The catalysed reaction is ATP + protein L-histidine = ADP + protein N-phospho-L-histidine.. In terms of biological role, member of the two-component regulatory system PhoP/PhoQ involved in virulence, adaptation to low Mg(2+) environments and the control of acid resistance genes. In low periplasmic Mg(2+), PhoQ functions as a membrane-associated protein kinase that undergoes autophosphorylation and subsequently transfers the phosphate to PhoP, resulting in the expression of PhoP-activated genes (PAG) and repression of PhoP-repressed genes (PRG). In high periplasmic Mg(2+), acts as a protein phosphatase that dephosphorylates phospho-PhoP, which results in the repression of PG and may lead to expression of some PRG. This chain is Sensor protein PhoQ (phoQ), found in Escherichia coli O6:H1 (strain CFT073 / ATCC 700928 / UPEC).